Reading from the N-terminus, the 230-residue chain is Cytochrome c oxidase subunit 2 (230 aa).

At M1 to S14 the chain is on the mitochondrial intermembrane side. Residues P15–M45 traverse the membrane as a helical segment. Over V46 to Q59 the chain is Mitochondrial matrix. Residues E60–M87 form a helical membrane-spanning segment. Residues D88 to A230 lie on the Mitochondrial intermembrane side of the membrane. Cu cation is bound by residues H161, C196, E198, C200, H204, and M207. E198 provides a ligand contact to Mg(2+).

This sequence belongs to the cytochrome c oxidase subunit 2 family. Component of the cytochrome c oxidase (complex IV, CIV), a multisubunit enzyme composed of 14 subunits. The complex is composed of a catalytic core of 3 subunits MT-CO1, MT-CO2 and MT-CO3, encoded in the mitochondrial DNA, and 11 supernumerary subunits COX4I, COX5A, COX5B, COX6A, COX6B, COX6C, COX7A, COX7B, COX7C, COX8 and NDUFA4, which are encoded in the nuclear genome. The complex exists as a monomer or a dimer and forms supercomplexes (SCs) in the inner mitochondrial membrane with NADH-ubiquinone oxidoreductase (complex I, CI) and ubiquinol-cytochrome c oxidoreductase (cytochrome b-c1 complex, complex III, CIII), resulting in different assemblies (supercomplex SCI(1)III(2)IV(1) and megacomplex MCI(2)III(2)IV(2)). Found in a complex with TMEM177, COA6, COX18, COX20, SCO1 and SCO2. Interacts with TMEM177 in a COX20-dependent manner. Interacts with COX20. Interacts with COX16. The cofactor is Cu cation.

It is found in the mitochondrion inner membrane. The catalysed reaction is 4 Fe(II)-[cytochrome c] + O2 + 8 H(+)(in) = 4 Fe(III)-[cytochrome c] + 2 H2O + 4 H(+)(out). Component of the cytochrome c oxidase, the last enzyme in the mitochondrial electron transport chain which drives oxidative phosphorylation. The respiratory chain contains 3 multisubunit complexes succinate dehydrogenase (complex II, CII), ubiquinol-cytochrome c oxidoreductase (cytochrome b-c1 complex, complex III, CIII) and cytochrome c oxidase (complex IV, CIV), that cooperate to transfer electrons derived from NADH and succinate to molecular oxygen, creating an electrochemical gradient over the inner membrane that drives transmembrane transport and the ATP synthase. Cytochrome c oxidase is the component of the respiratory chain that catalyzes the reduction of oxygen to water. Electrons originating from reduced cytochrome c in the intermembrane space (IMS) are transferred via the dinuclear copper A center (CU(A)) of subunit 2 and heme A of subunit 1 to the active site in subunit 1, a binuclear center (BNC) formed by heme A3 and copper B (CU(B)). The BNC reduces molecular oxygen to 2 water molecules using 4 electrons from cytochrome c in the IMS and 4 protons from the mitochondrial matrix. The chain is Cytochrome c oxidase subunit 2 (mt-co2) from Gadus morhua (Atlantic cod).